The following is a 356-amino-acid chain: Replication factor C subunit 3 (356 aa).

Position 20 is an N6-acetyllysine (K20). S125 is modified (phosphoserine).

It belongs to the activator 1 small subunits family. In terms of assembly, subunit of the RFC complex, an heteropentameric complex consisting of a large subunit RFC1 and four small subunits RFC2, RFC3, RFC4 and RFC5; the RFC complex interacts with PCNA. Forms an heterotetrameric complex with RFC2, RFC4 and RFC5; this complex has ATPase activity but is not stimulated by PCNA. The heterotetramer of subunits RFC2, RFC3, RFC4 and RFC5 interacts with RAD17. Interacts with CNTD1; this interaction facilitates crossover formation.

The protein localises to the nucleus. In terms of biological role, subunit of the replication factor C (RFC) complex which acts during elongation of primed DNA templates by DNA polymerases delta and epsilon, and is necessary for ATP-dependent loading of proliferating cell nuclear antigen (PCNA) onto primed DNA. The polypeptide is Replication factor C subunit 3 (Rfc3) (Mus musculus (Mouse)).